Reading from the N-terminus, the 600-residue chain is Probable pectin methyltransferase QUA3 (600 aa).

Topologically, residues 1-18 are cytoplasmic; that stretch reads MGHVNLPASKRGNPRQWR. A helical; Signal-anchor for type II membrane protein membrane pass occupies residues 19 to 39; that stretch reads LLDIVTAAFFGIVLLFFILLF. Residues 40–600 are Lumenal-facing; that stretch reads TPLGDSMAAS…SLWKLPSNSH (561 aa). N-linked (GlcNAc...) asparagine glycosylation is present at asparagine 283.

This sequence belongs to the methyltransferase superfamily. In terms of tissue distribution, highly expressed and abundant in suspension-cultured cells, but low levels in seedlings.

It is found in the golgi apparatus membrane. The protein operates within glycan metabolism; pectin biosynthesis. S-adenosyl-L-methionine (SAM)-dependent methyltransferase (MTase) which mediates the methylesterification of the pectin homogalacturonan (HG) and thus regulates cell wall biosynthesis, at least in suspension-cultured cells. The sequence is that of Probable pectin methyltransferase QUA3 from Arabidopsis thaliana (Mouse-ear cress).